The chain runs to 468 residues: 5-carboxymethyl-2-hydroxymuconate semialdehyde dehydrogenase (468 aa).

E244 is a catalytic residue. The active-site Nucleophile is the C278.

It belongs to the aldehyde dehydrogenase family. In terms of assembly, homodimer.

The catalysed reaction is 2-hydroxy-5-carboxymethylmuconate semialdehyde + NAD(+) + H2O = (2E,4Z)-5-hydroxypenta-2,4-diene-1,2,5-tricarboxylate + NADH + 2 H(+). It participates in aromatic compound metabolism; 4-hydroxyphenylacetate degradation; pyruvate and succinate semialdehyde from 4-hydroxyphenylacetate: step 3/7. Functionally, catalyzes the conversion of 5-carboxymethyl-2-hydroxy-muconic semialdehyde (CHMS) into 5-carboxymethyl-2-hydroxy-muconic acid (CHM or (2E,4Z)-5-hydroxypenta-2,4-diene-1,2,5-tricarboxylate). Is involved in a meta-cleavage pathway for the catabolism of 4-hydroxyphenylacetate (4-HPA) via homoprotocatechuate (HPC or 3,4-dihydroxyphenylacetate). The sequence is that of 5-carboxymethyl-2-hydroxymuconate semialdehyde dehydrogenase from Escherichia coli.